Consider the following 123-residue polypeptide: MVVNIYDTANELSRQLRETQEYQGLQKAFEALKADGDTFDTFKKFQQAQADAQHKQMTGQQPTDDEIKNIQNLAKEVSGKKVVQDLMNQERQVDSMLQQLNKTITSPIQDLYSEVMPKMPGQE.

Belongs to the UPF0342 family.

This is UPF0342 protein LAR_1202 from Limosilactobacillus reuteri subsp. reuteri (strain JCM 1112) (Lactobacillus reuteri).